The following is a 328-amino-acid chain: Eukaryotic translation initiation factor 3 subunit I (328 aa).

5 WD repeats span residues 8 to 47 (GHERAITQIKYNREGDLIFSTAKDHKPSVWFSLNGERLGT), 50 to 91 (GHQG…GTIP), 148 to 187 (SIQTKITSMLWGALDETVITGHENGSIRIWDLRTAKELNS), 190 to 229 (DHTGVINDMQLSADGTMLVSASKDTTAKLFDSESLMCLKT), and 287 to 328 (GHFG…FVFE).

This sequence belongs to the eIF-3 subunit I family. In terms of assembly, component of the eukaryotic translation initiation factor 3 (eIF-3) complex.

The protein resides in the cytoplasm. In terms of biological role, component of the eukaryotic translation initiation factor 3 (eIF-3) complex, which is involved in protein synthesis of a specialized repertoire of mRNAs and, together with other initiation factors, stimulates binding of mRNA and methionyl-tRNAi to the 40S ribosome. The eIF-3 complex specifically targets and initiates translation of a subset of mRNAs involved in cell proliferation. The sequence is that of Eukaryotic translation initiation factor 3 subunit I from Culex quinquefasciatus (Southern house mosquito).